Here is a 527-residue protein sequence, read N- to C-terminus: tRNA pseudouridine synthase Pus10 (527 aa).

Cys-21 and Cys-24 together coordinate Zn(2+). Residues 42–87 (KELLNELQKFLEPEKPELILEAPNPPLKKIRLHEDGIDNLSEDGKE) are a coiled coil. The residue at position 82 (Ser-82) is a Phosphoserine. The Zn(2+) site is built by Cys-107 and Cys-110. An RNA binding forefinger loop region spans residues 302–315 (TPWIIDGERKMESS). Asp-342 acts as the Nucleophile in catalysis. The RNA binding thumb loop stretch occupies residues 440-455 (QKTPLRVLHRRPLAVR).

It belongs to the pseudouridine synthase Pus10 family. Interacts with components of the microprocessor complex DROSHA and DGCR8. In terms of processing, proteolytically cleaved during TRAIL-induced cell death. Cleaved, in vitro, either by caspase-3 (CASP3) or caspase-8 (CASP8).

It is found in the nucleus. The protein resides in the cytoplasm. The protein localises to the mitochondrion. It catalyses the reaction uridine(55) in tRNA = pseudouridine(55) in tRNA. It carries out the reaction uridine(54) in tRNA = pseudouridine(54) in tRNA. Protein with different functions depending on its subcellular location: involved in miRNA processing in the nucleus and acts as a tRNA pseudouridylate synthase in the cytoplasm. In the cytoplasm, acts as a pseudouridylate synthase by catalyzing synthesis of pseudouridine(54) and pseudouridine(55) from uracil-54 and uracil-55, respectively, in the psi GC loop of a subset of tRNAs. tRNA pseudouridylate synthase activity is enhanced by the presence of 1-methyladenosine at position 53-61 of tRNAs. Does not show tRNA pseudouridylate synthase activity in the nucleus. In the nucleus, promotes primary microRNAs (pri-miRNAs) processing independently of its RNA pseudouridylate synthase activity. Binds pri-miRNAs. Modulator of TRAIL/TNFSF10-induced cell death via activation of procaspase-8 and BID cleavage. Required for the progression of the apoptotic signal through intrinsic mitochondrial cell death. The polypeptide is tRNA pseudouridine synthase Pus10 (Mus musculus (Mouse)).